The chain runs to 559 residues: Protein GRAVITROPIC IN THE LIGHT 1 (559 aa).

Residues Ala107–Ile127 are disordered. The segment covering Tyr114 to Ile127 has biased composition (acidic residues).

Its function is as follows. Required for red (R) and far red (FR) light-induced and phytochrome-mediated deregulation of negative gravitropism leading to randomization of hypocotyl growth orientation. This chain is Protein GRAVITROPIC IN THE LIGHT 1, found in Arabidopsis thaliana (Mouse-ear cress).